The following is a 608-amino-acid chain: 1-phosphatidylinositol 4,5-bisphosphate phosphodiesterase zeta-1 (608 aa).

The EF-hand domain maps to 35 to 70 (CSYIHVKQIFKDNDRLKQGRITIEEFRAIYRIITHR). The region spanning 155–299 (QDMTHPLNDY…LKFKILVKNK (145 aa)) is the PI-PLC X-box domain. Catalysis depends on residues His170 and His215. A disordered region spans residues 305 to 324 (KETHERKGSDKRGDNQDKET). Residues 349–465 (LSDLVIYTKA…GYILKPHFLR (117 aa)) enclose the PI-PLC Y-box domain. The 125-residue stretch at 465-589 (RESKSYFNPS…KGYRRIPLFS (125 aa)) folds into the C2 domain.

Interacts via its C2 domain with PtdIns(3)P and, to a lesser extent, PtdIns(5)P in vitro. The cofactor is Ca(2+). Expressed specifically in testis and sperm. Weakly expressed in pancreatic-duct cells. Up-regulated in pancreatic-duct cells from patients with cystic fibrosis.

Its subcellular location is the nucleus. The protein resides in the cytoplasm. It localises to the perinuclear region. The catalysed reaction is a 1,2-diacyl-sn-glycero-3-phospho-(1D-myo-inositol-4,5-bisphosphate) + H2O = 1D-myo-inositol 1,4,5-trisphosphate + a 1,2-diacyl-sn-glycerol + H(+). Functionally, the production of the second messenger molecules diacylglycerol (DAG) and inositol 1,4,5-trisphosphate (IP3) is mediated by activated phosphatidylinositol-specific phospholipase C enzymes. In vitro, hydrolyzes PtdIns(4,5)P2 in a Ca(2+)-dependent manner. Triggers intracellular Ca(2+) oscillations in oocytes solely during M phase and is involved in inducing oocyte activation and initiating embryonic development up to the blastocyst stage. Is therefore a strong candidate for the egg-activating soluble sperm factor that is transferred from the sperm into the egg cytoplasm following gamete membrane fusion. May exert an inhibitory effect on phospholipase-C-coupled processes that depend on calcium ions and protein kinase C, including CFTR trafficking and function. The sequence is that of 1-phosphatidylinositol 4,5-bisphosphate phosphodiesterase zeta-1 from Homo sapiens (Human).